A 262-amino-acid chain; its full sequence is Ribosome-recycling factor, mitochondrial (262 aa).

The N-terminal 55 residues, 1 to 55, are a transit peptide targeting the mitochondrion; it reads MALGLKCFRMVHPTFRNYLAASIRPVSEVTLKTVHERQHGHRQYMAYSAVPVRHF.

It belongs to the RRF family.

The protein resides in the mitochondrion. In terms of biological role, responsible for the disassembly of ribosomes from messenger RNA at the termination of mitochondrial protein biosynthesis. Acts in collaboration with GFM2. Promotes mitochondrial ribosome recycling by dissolution of intersubunit contacts. The protein is Ribosome-recycling factor, mitochondrial of Homo sapiens (Human).